Consider the following 793-residue polypeptide: Phenylalanine--tRNA ligase beta subunit (793 aa).

The tRNA-binding domain maps to 40 to 159 (SKLNTKLVIG…MDEMVGREIS (120 aa)). Residues 401–476 (NYDNVYSITL…RLYGYDNIIE (76 aa)) form the B5 domain. Residues Asp454, Asp460, Glu463, and Glu464 each coordinate Mg(2+). In terms of domain architecture, FDX-ACB spans 701-793 (SKFQKSTRDI…NLKELKVKVR (93 aa)).

It belongs to the phenylalanyl-tRNA synthetase beta subunit family. Type 1 subfamily. In terms of assembly, tetramer of two alpha and two beta subunits. The cofactor is Mg(2+).

The protein resides in the cytoplasm. It catalyses the reaction tRNA(Phe) + L-phenylalanine + ATP = L-phenylalanyl-tRNA(Phe) + AMP + diphosphate + H(+). This chain is Phenylalanine--tRNA ligase beta subunit, found in Mesoplasma florum (strain ATCC 33453 / NBRC 100688 / NCTC 11704 / L1) (Acholeplasma florum).